The primary structure comprises 418 residues: MIFDKDDFKAYDADLWNAIAKEEERQQNNIELIASENVVSKAVMAAQGSILTNKYAEGYPGRRYYGGTDVVDVVETLAIERAKEIFGAKFANVQPHSGSQANCAAYMSLIEPGDTVMGMDLASGGHLTHGAPVSFSGQTYNFVSYSVDPETELLDFDAILKQAQEVKPKLIVAGASAYSQIIDFSKFREIADAVGAKLMVDMAHIAGLVAAGLHPSPVPYAHITTTTTHKTLRGPRGGLILTNDEELAKKINSAIFPGIQGGPLEHVVAAKAVSFKEVLDPAFKEYAANVIKNSKAMADVFLQDPDFRIISGGTENHLFLVDVTKVVENGKVAQNLLDEVNITLNKNSIPYESLSPFKTSGIRIGAAAITARGFGEEESRKVAELIIKTLKNSENEAVLEEVRSAVKELTDAFLLYED.

(6S)-5,6,7,8-tetrahydrofolate is bound by residues leucine 121 and 125–127 (GHL). Position 230 is an N6-(pyridoxal phosphate)lysine (lysine 230). (6S)-5,6,7,8-tetrahydrofolate contacts are provided by residues glutamate 246 and 355 to 357 (SPF).

This sequence belongs to the SHMT family. In terms of assembly, homodimer. Requires pyridoxal 5'-phosphate as cofactor.

It localises to the cytoplasm. The catalysed reaction is (6R)-5,10-methylene-5,6,7,8-tetrahydrofolate + glycine + H2O = (6S)-5,6,7,8-tetrahydrofolate + L-serine. Its pathway is one-carbon metabolism; tetrahydrofolate interconversion. It functions in the pathway amino-acid biosynthesis; glycine biosynthesis; glycine from L-serine: step 1/1. Its function is as follows. Catalyzes the reversible interconversion of serine and glycine with tetrahydrofolate (THF) serving as the one-carbon carrier. This reaction serves as the major source of one-carbon groups required for the biosynthesis of purines, thymidylate, methionine, and other important biomolecules. Also exhibits THF-independent aldolase activity toward beta-hydroxyamino acids, producing glycine and aldehydes, via a retro-aldol mechanism. The polypeptide is Serine hydroxymethyltransferase (Streptococcus pneumoniae (strain ATCC 700669 / Spain 23F-1)).